A 291-amino-acid polypeptide reads, in one-letter code: 4-hydroxy-tetrahydrodipicolinate synthase (291 aa).

Residue Thr-47 participates in pyruvate binding. Tyr-134 acts as the Proton donor/acceptor in catalysis. The active-site Schiff-base intermediate with substrate is the Lys-162. Residue Ile-205 coordinates pyruvate.

This sequence belongs to the DapA family. Homotetramer; dimer of dimers.

The protein localises to the cytoplasm. It catalyses the reaction L-aspartate 4-semialdehyde + pyruvate = (2S,4S)-4-hydroxy-2,3,4,5-tetrahydrodipicolinate + H2O + H(+). It functions in the pathway amino-acid biosynthesis; L-lysine biosynthesis via DAP pathway; (S)-tetrahydrodipicolinate from L-aspartate: step 3/4. Catalyzes the condensation of (S)-aspartate-beta-semialdehyde [(S)-ASA] and pyruvate to 4-hydroxy-tetrahydrodipicolinate (HTPA). In Methanospirillum hungatei JF-1 (strain ATCC 27890 / DSM 864 / NBRC 100397 / JF-1), this protein is 4-hydroxy-tetrahydrodipicolinate synthase.